The chain runs to 549 residues: Indole-3-acetic acid-amido synthetase GH3.2 (549 aa).

The protein belongs to the IAA-amido conjugating enzyme family. Expressed in flowers, pollen, cotyledons, stipules, true leaves, hypocotyls, and all parts of the roots except for the primary root tips.

In terms of biological role, catalyzes the synthesis of indole-3-acetic acid (IAA)-amino acid conjugates, providing a mechanism for the plant to cope with the presence of excess auxin. Strongly reactive with Glu, Gln, Trp, Asp, Ala, Leu, Phe, Gly, Tyr, Met, Ile and Val. Little or no product formation with His, Ser, Thr, Arg, Lys, or Cys. Also active on pyruvic and butyric acid analogs of IAA, PAA and the synthetic auxin naphthaleneacetic acid (NAA). The two chlorinated synthetic auxin herbicides 2,4-D and 3,6-dichloro-o-anisic acid (dicamba) cannot be used as substrates. This is Indole-3-acetic acid-amido synthetase GH3.2 (GH3.2) from Arabidopsis thaliana (Mouse-ear cress).